The sequence spans 205 residues: uncharacterized protein (205 aa).

The stretch at 10 to 75 forms a coiled coil; that stretch reads QDLLSAVDQQ…AANLMTVMTD (66 aa). The disordered stretch occupies residues 108 to 141; it reads MPLPSSNTNNDQTSPPASGKTSETPKKNPTNAMF. Positions 111–141 are enriched in polar residues; the sequence is PSSNTNNDQTSPPASGKTSETPKKNPTNAMF.

This sequence belongs to the asfivirus K205R family.

It localises to the host cytoplasm. In terms of biological role, induces host endoplasmic reticulum stress and consequently activates autophagy and NF-kappa-B signaling pathway. In turn, may induce autophagy-mediated STING1 degradation and innate immune evasion. This is an uncharacterized protein from Ornithodoros (relapsing fever ticks).